The chain runs to 220 residues: Glutamine amidotransferase-like class 1 domain-containing protein 1 (220 aa).

The signal sequence occupies residues 1-38; it reads MASERLPNRPACLLVASGAAEGVSAQSFLHCFTMASTA. Asn-201 carries an N-linked (GlcNAc...) asparagine glycan.

The protein belongs to the peptidase C56 family. Homotetramer. Component of the FERRY complex composed of five subunits, TBCK, PPP1R21, FERRY3, CRYZL1 and GATD1 with a ratio of 1:2:1:2:4, respectively.

The protein resides in the secreted. It localises to the early endosome. Functionally, component of the FERRY complex (Five-subunit Endosomal Rab5 and RNA/ribosome intermediary). The FERRY complex directly interacts with mRNAs and RAB5A, and functions as a RAB5A effector involved in the localization and the distribution of specific mRNAs most likely by mediating their endosomal transport. The complex recruits mRNAs and ribosomes to early endosomes through direct mRNA-interaction. The protein is Glutamine amidotransferase-like class 1 domain-containing protein 1 of Homo sapiens (Human).